The sequence spans 439 residues: Protein translocase subunit SecY (439 aa).

Transmembrane regions (helical) follow at residues Ile19–Gly39, Tyr68–Leu88, Tyr116–Met136, Leu151–Ile171, Phe176–Ile196, Trp216–Val236, Val269–Leu289, Trp312–Val332, Val373–Gly393, and Lys396–Val416.

This sequence belongs to the SecY/SEC61-alpha family. In terms of assembly, component of the Sec protein translocase complex. Heterotrimer consisting of SecY, SecE and SecG subunits. The heterotrimers can form oligomers, although 1 heterotrimer is thought to be able to translocate proteins. Interacts with the ribosome. Interacts with SecDF, and other proteins may be involved. Interacts with SecA.

The protein localises to the cell membrane. Functionally, the central subunit of the protein translocation channel SecYEG. Consists of two halves formed by TMs 1-5 and 6-10. These two domains form a lateral gate at the front which open onto the bilayer between TMs 2 and 7, and are clamped together by SecE at the back. The channel is closed by both a pore ring composed of hydrophobic SecY resides and a short helix (helix 2A) on the extracellular side of the membrane which forms a plug. The plug probably moves laterally to allow the channel to open. The ring and the pore may move independently. In Lactococcus lactis subsp. cremoris (Streptococcus cremoris), this protein is Protein translocase subunit SecY.